Reading from the N-terminus, the 194-residue chain is Imidazoleglycerol-phosphate dehydratase (194 aa).

This sequence belongs to the imidazoleglycerol-phosphate dehydratase family.

It localises to the cytoplasm. The catalysed reaction is D-erythro-1-(imidazol-4-yl)glycerol 3-phosphate = 3-(imidazol-4-yl)-2-oxopropyl phosphate + H2O. Its pathway is amino-acid biosynthesis; L-histidine biosynthesis; L-histidine from 5-phospho-alpha-D-ribose 1-diphosphate: step 6/9. This is Imidazoleglycerol-phosphate dehydratase from Bacillus cereus (strain AH820).